Here is a 273-residue protein sequence, read N- to C-terminus: Glutamate 5-kinase (273 aa).

Lysine 15 serves as a coordination point for ATP. Residues serine 55, aspartate 142, and asparagine 158 each contribute to the substrate site. Residues 178-179 and 220-226 each bind ATP; these read SD and TGGMLSK.

It belongs to the glutamate 5-kinase family.

It localises to the cytoplasm. The catalysed reaction is L-glutamate + ATP = L-glutamyl 5-phosphate + ADP. It functions in the pathway amino-acid biosynthesis; L-proline biosynthesis; L-glutamate 5-semialdehyde from L-glutamate: step 1/2. Functionally, catalyzes the transfer of a phosphate group to glutamate to form L-glutamate 5-phosphate. The protein is Glutamate 5-kinase of Streptococcus pyogenes serotype M3 (strain ATCC BAA-595 / MGAS315).